Reading from the N-terminus, the 599-residue chain is MKNIRNFSIIAHIDHGKSTLSDRIIQICGGLSDREMAAQVLDSMDLERERGITIKAQSVTLDYKASDGETYQLNFIDTPGHVDFSYEVSRSLAACEGALLVVDAGQGVEAQTLANCYTAMEMDLEVVPVLNKIDLPAADPERVADEIEDIVGIDAHDAVRCSAKTGVGVPDVLERLVRDIPPPEGDPDAPLQALIIDSWFDNYLGVVSLVRIKNGTMRKGDKIKVMSTGQVYNADRLGIFTPKQVDRTELKCGEVGWLVCAIKDILGAPVGDTLTAARNPADKALPGFKKVKPQVYAGLFPVSSDDYENFRDALGKLSLNDASLFYEPESSTALGFGFRCGFLGLLHMEIIQERLEREYDLDLITTAPTVVYEVETTSKEVIYVDSPSKLPPLNNIQELREPIAECHMLLPQEFLGNVITLCIEKRGVQTNMVYHGKQVALTYEIPMAEVVLDFFDRLKSTSRGYASLDYNFKRFQASNMVRVDVLINGERVDALALITHNDNAPYRGRELVEKMKELIPRQQFDIAIQAAIGNHIIARSTVKQLRKNVLAKCYGGDVSRKKKLLQKQKEGKKRMKQVGNVELPQEAFLAILHVGKDGK.

The region spanning 2 to 184 (KNIRNFSIIA…RLVRDIPPPE (183 aa)) is the tr-type G domain. GTP-binding positions include 14–19 (DHGKST) and 131–134 (NKID).

Belongs to the TRAFAC class translation factor GTPase superfamily. Classic translation factor GTPase family. LepA subfamily.

Its subcellular location is the cell inner membrane. It catalyses the reaction GTP + H2O = GDP + phosphate + H(+). In terms of biological role, required for accurate and efficient protein synthesis under certain stress conditions. May act as a fidelity factor of the translation reaction, by catalyzing a one-codon backward translocation of tRNAs on improperly translocated ribosomes. Back-translocation proceeds from a post-translocation (POST) complex to a pre-translocation (PRE) complex, thus giving elongation factor G a second chance to translocate the tRNAs correctly. Binds to ribosomes in a GTP-dependent manner. The chain is Elongation factor 4 from Klebsiella pneumoniae (strain 342).